Here is a 246-residue protein sequence, read N- to C-terminus: Small ribosomal subunit protein uS2 (246 aa).

Belongs to the universal ribosomal protein uS2 family.

This Burkholderia cenocepacia (strain ATCC BAA-245 / DSM 16553 / LMG 16656 / NCTC 13227 / J2315 / CF5610) (Burkholderia cepacia (strain J2315)) protein is Small ribosomal subunit protein uS2.